The chain runs to 331 residues: uncharacterized protein (331 aa).

It belongs to the ornithine cyclodeaminase/mu-crystallin family.

This is an uncharacterized protein from Sinorhizobium fredii (strain NBRC 101917 / NGR234).